Here is a 351-residue protein sequence, read N- to C-terminus: MPILLEHIQLNDEDLKDTKHLAEILKYKNNSIKTIINVLEWEDSNIRYCYEKSNVYYFITFFIIVGLVWAIFPEVWLWCEQVFCISPTIHIIICCLYFIITIILFLFLCGVVGTFLHLWATFFTLSKCDSKILKLKEGLFTTLSLIWISTSLKTILKTKYAICRDYAKLTSAILHNLNIKHYFLVYPTHVAVAVKIDDYYYVIDQKLPIYKIDVWLKKLGKEKVKIYTPVDIYNSKLKFVEKYYKNENNLKSEISDDILRKIEEDVKKELQIKNAEQYNKKVEPIPVKLSIPIENYDEITHYSIVRVISKEIYNKFLTNIKNVSNIEIKKDEGKFAVNVYYEIPNSIPNSK.

2 helical membrane passes run 58 to 78 (FITF…VWLW) and 91 to 111 (IIIC…LCGV).

It belongs to the UPF0252 family.

The protein resides in the cell membrane. The polypeptide is UPF0252 protein MJECL39 (Methanocaldococcus jannaschii (strain ATCC 43067 / DSM 2661 / JAL-1 / JCM 10045 / NBRC 100440) (Methanococcus jannaschii)).